The following is a 445-amino-acid chain: Ribosomal protein uS12 methylthiotransferase RimO (445 aa).

An MTTase N-terminal domain is found at 4–119; it reads IKVALVSLGC…LLESIKVFLK (116 aa). [4Fe-4S] cluster-binding residues include cysteine 13, cysteine 48, cysteine 82, cysteine 156, cysteine 160, and cysteine 163. The 231-residue stretch at 142–372 folds into the Radical SAM core domain; sequence TTPTYTAYVR…MILQQSISKD (231 aa). Residues 375–441 enclose the TRAM domain; the sequence is KEKIGKIYEV…EYDLIGVVYN (67 aa).

It belongs to the methylthiotransferase family. RimO subfamily. [4Fe-4S] cluster serves as cofactor.

It is found in the cytoplasm. The catalysed reaction is L-aspartate(89)-[ribosomal protein uS12]-hydrogen + (sulfur carrier)-SH + AH2 + 2 S-adenosyl-L-methionine = 3-methylsulfanyl-L-aspartate(89)-[ribosomal protein uS12]-hydrogen + (sulfur carrier)-H + 5'-deoxyadenosine + L-methionine + A + S-adenosyl-L-homocysteine + 2 H(+). Catalyzes the methylthiolation of an aspartic acid residue of ribosomal protein uS12. The sequence is that of Ribosomal protein uS12 methylthiotransferase RimO from Clostridium botulinum (strain Langeland / NCTC 10281 / Type F).